We begin with the raw amino-acid sequence, 144 residues long: Oleosin H2 (144 aa).

Position 2 is an N-acetylalanine (Ala2). 3 consecutive transmembrane segments (helical) span residues 28-48 (VLAVVTLFPLGAVLLCLAGLI), 53-73 (IIGLAVATPLFVIFSPILVPA), and 75-95 (LTIALAVTGFLTSGAFGITAL). Positions 61–72 (PLFVIFSPILVP) match the Proline-knot motif. Residues 124 to 144 (QETVGQKTREAGQRSQDVIRP) are disordered.

Belongs to the oleosin family. In terms of tissue distribution, expressed in seeds (at protein level).

It localises to the lipid droplet. The protein resides in the membrane. In terms of biological role, may have a structural role to stabilize the lipid body during desiccation of the seed by preventing coalescence of the oil. Probably interacts with both lipid and phospholipid moieties of lipid bodies. May also provide recognition signals for specific lipase anchorage in lipolysis during seedling growth. In Sesamum indicum (Oriental sesame), this protein is Oleosin H2.